The primary structure comprises 1012 residues: Klotho (1012 aa).

The first 33 residues, 1-33 (MPASAPPRRPRPPPPSLSLLLVLLGLGGRRLRA), serve as a signal peptide directing secretion. Residues 34–981 (EPGDGAQTWA…ECSFFHTRKS (948 aa)) are Extracellular-facing. 2 glycosyl hydrolase-1 regions span residues 57–506 (FQGT…KNGF) and 515–953 (LEGT…SNGF). Residues Asn-106, Asn-159, Asn-283, Asn-344, Asn-607, Asn-612, and Asn-694 are each glycosylated (N-linked (GlcNAc...) asparagine). The helical transmembrane segment at 982 to 1002 (LLAFIAFLFFASIISLSLIFY) threads the bilayer. The Cytoplasmic portion of the chain corresponds to 1003–1012 (YSKKGRRSYK).

It belongs to the glycosyl hydrolase 1 family. Klotho subfamily. In terms of assembly, homodimer. Interacts with FGF23 and FGFR1. Post-translationally, N-glycosylated. As to expression, present in cortical renal tubules (at protein level). Soluble peptide is present in serum and cerebrospinal fluid. Expressed in kidney, placenta, small intestine and prostate. Down-regulated in renal cell carcinomas, hepatocellular carcinomas, and in chronic renal failure kidney.

The protein localises to the cell membrane. It is found in the apical cell membrane. Its subcellular location is the secreted. It carries out the reaction a beta-D-glucuronoside + H2O = D-glucuronate + an alcohol. In terms of biological role, may have weak glycosidase activity towards glucuronylated steroids. However, it lacks essential active site Glu residues at positions 239 and 872, suggesting it may be inactive as a glycosidase in vivo. May be involved in the regulation of calcium and phosphorus homeostasis by inhibiting the synthesis of active vitamin D. Essential factor for the specific interaction between FGF23 and FGFR1. Functionally, the Klotho peptide generated by cleavage of the membrane-bound isoform may be an anti-aging circulating hormone which would extend life span by inhibiting insulin/IGF1 signaling. The protein is Klotho (KL) of Homo sapiens (Human).